We begin with the raw amino-acid sequence, 575 residues long: Flagellin A (575 aa).

3 repeat units span residues 405 to 409, 411 to 415, and 447 to 450.

The protein belongs to the bacterial flagellin family. As to quaternary structure, heteromer of flaA and flaB.

Its subcellular location is the secreted. It is found in the bacterial flagellum. Functionally, flagellin is the subunit protein which polymerizes to form the filaments of bacterial flagella. The sequence is that of Flagellin A (flaA) from Campylobacter jejuni.